A 315-amino-acid chain; its full sequence is DNA-directed RNA polymerase subunit alpha (315 aa).

Residues 1-228 (MIEIEKPKVD…EHLNLFIDLT (228 aa)) form an alpha N-terminal domain (alpha-NTD) region. The interval 245 to 315 (KEKVLEMTIE…LGLGLKPSEE (71 aa)) is alpha C-terminal domain (alpha-CTD).

Belongs to the RNA polymerase alpha chain family. As to quaternary structure, homodimer. The RNAP catalytic core consists of 2 alpha, 1 beta, 1 beta' and 1 omega subunit. When a sigma factor is associated with the core the holoenzyme is formed, which can initiate transcription.

It carries out the reaction RNA(n) + a ribonucleoside 5'-triphosphate = RNA(n+1) + diphosphate. Functionally, DNA-dependent RNA polymerase catalyzes the transcription of DNA into RNA using the four ribonucleoside triphosphates as substrates. This is DNA-directed RNA polymerase subunit alpha from Clostridioides difficile (strain 630) (Peptoclostridium difficile).